The chain runs to 357 residues: tRNA N6-adenosine threonylcarbamoyltransferase (357 aa).

Positions 115 and 119 each coordinate Fe cation. Substrate-binding positions include 137–141 (LASGG), Asp-170, Gly-183, and Asn-281. Residue Asp-309 participates in Fe cation binding.

Belongs to the KAE1 / TsaD family. It depends on Fe(2+) as a cofactor.

It is found in the cytoplasm. It catalyses the reaction L-threonylcarbamoyladenylate + adenosine(37) in tRNA = N(6)-L-threonylcarbamoyladenosine(37) in tRNA + AMP + H(+). In terms of biological role, required for the formation of a threonylcarbamoyl group on adenosine at position 37 (t(6)A37) in tRNAs that read codons beginning with adenine. Is involved in the transfer of the threonylcarbamoyl moiety of threonylcarbamoyl-AMP (TC-AMP) to the N6 group of A37, together with TsaE and TsaB. TsaD likely plays a direct catalytic role in this reaction. The chain is tRNA N6-adenosine threonylcarbamoyltransferase from Nitrobacter winogradskyi (strain ATCC 25391 / DSM 10237 / CIP 104748 / NCIMB 11846 / Nb-255).